The primary structure comprises 222 residues: Nudix hydrolase 11 (222 aa).

In terms of domain architecture, Nudix hydrolase spans Ala-31–Phe-175. The short motif at Gly-73–Gly-96 is the Nudix box element. Mg(2+) contacts are provided by Glu-90 and Glu-94. The helical transmembrane segment at Phe-186–Tyr-204 threads the bilayer.

Belongs to the Nudix hydrolase family. PCD1 subfamily. Requires Mn(2+) as cofactor. Mg(2+) serves as cofactor. Expressed in roots, stems and leaves.

The protein localises to the peroxisome membrane. Functionally, coenzyme A diphosphatase which mediates the cleavage of CoA into 3',5'-ADP from CoA and 4'-phosphopantetheine. Can use malonyl-CoA, hexanoyl-CoA, lauroyl-CoA, myristoyl-CoA and palmitoyl-CoA as substrates, but not isobutyryl-CoA or propionyl-CoA. This Arabidopsis thaliana (Mouse-ear cress) protein is Nudix hydrolase 11 (NUDT11).